Here is a 392-residue protein sequence, read N- to C-terminus: S-adenosylmethionine decarboxylase proenzyme (392 aa).

Active-site residues include Glu43 and Glu46. Residue Ser100 is the Schiff-base intermediate with substrate; via pyruvic acid of the active site. Ser100 carries the post-translational modification Pyruvic acid (Ser); by autocatalysis. Residue Cys114 is the Proton donor; for catalytic activity of the active site. Catalysis depends on proton acceptor; for processing activity residues Ser264 and His277.

This sequence belongs to the eukaryotic AdoMetDC family. Pyruvate is required as a cofactor. In terms of processing, is synthesized initially as an inactive proenzyme. Formation of the active enzyme involves a self-maturation process in which the active site pyruvoyl group is generated from an internal serine residue via an autocatalytic post-translational modification. Two non-identical subunits are generated from the proenzyme in this reaction, and the pyruvate is formed at the N-terminus of the alpha chain, which is derived from the carboxyl end of the proenzyme. The post-translation cleavage follows an unusual pathway, termed non-hydrolytic serinolysis, in which the side chain hydroxyl group of the serine supplies its oxygen atom to form the C-terminus of the beta chain, while the remainder of the serine residue undergoes an oxidative deamination to produce ammonia and the pyruvoyl group blocking the N-terminus of the alpha chain.

It catalyses the reaction S-adenosyl-L-methionine + H(+) = S-adenosyl 3-(methylsulfanyl)propylamine + CO2. It functions in the pathway amine and polyamine biosynthesis; S-adenosylmethioninamine biosynthesis; S-adenosylmethioninamine from S-adenosyl-L-methionine: step 1/1. The chain is S-adenosylmethionine decarboxylase proenzyme from Leishmania infantum.